The chain runs to 151 residues: 3-hydroxyacyl-[acyl-carrier-protein] dehydratase FabZ (151 aa).

The active site involves His-57.

Belongs to the thioester dehydratase family. FabZ subfamily.

The protein localises to the cytoplasm. The catalysed reaction is a (3R)-hydroxyacyl-[ACP] = a (2E)-enoyl-[ACP] + H2O. Functionally, involved in unsaturated fatty acids biosynthesis. Catalyzes the dehydration of short chain beta-hydroxyacyl-ACPs and long chain saturated and unsaturated beta-hydroxyacyl-ACPs. The polypeptide is 3-hydroxyacyl-[acyl-carrier-protein] dehydratase FabZ (Tolumonas auensis (strain DSM 9187 / NBRC 110442 / TA 4)).